The sequence spans 412 residues: Trehalose synthase (412 aa).

It belongs to the glycosyltransferase group 1 family. Glycosyltransferase 4 subfamily. In terms of assembly, homodimer. It depends on Mg(2+) as a cofactor.

The enzyme catalyses an NDP-alpha-D-glucose + D-glucose = alpha,alpha-trehalose + a ribonucleoside 5'-diphosphate + H(+). In terms of biological role, synthesizes trehalose from ADP-glucose and glucose. Has a much lower activity toward UDP-glucose and GDP-glucose. The reaction is reversible, the equilibrium strongly favors trehalose synthesis. This chain is Trehalose synthase, found in Pyrococcus furiosus (strain ATCC 43587 / DSM 3638 / JCM 8422 / Vc1).